The chain runs to 304 residues: UDP-3-O-acyl-N-acetylglucosamine deacetylase (304 aa).

Zn(2+) contacts are provided by histidine 77, histidine 233, and aspartate 237. Histidine 260 (proton donor) is an active-site residue.

It belongs to the LpxC family. The cofactor is Zn(2+).

It catalyses the reaction a UDP-3-O-[(3R)-3-hydroxyacyl]-N-acetyl-alpha-D-glucosamine + H2O = a UDP-3-O-[(3R)-3-hydroxyacyl]-alpha-D-glucosamine + acetate. Its pathway is glycolipid biosynthesis; lipid IV(A) biosynthesis; lipid IV(A) from (3R)-3-hydroxytetradecanoyl-[acyl-carrier-protein] and UDP-N-acetyl-alpha-D-glucosamine: step 2/6. Its function is as follows. Catalyzes the hydrolysis of UDP-3-O-myristoyl-N-acetylglucosamine to form UDP-3-O-myristoylglucosamine and acetate, the committed step in lipid A biosynthesis. This chain is UDP-3-O-acyl-N-acetylglucosamine deacetylase, found in Lawsonia intracellularis (strain PHE/MN1-00).